A 195-amino-acid polypeptide reads, in one-letter code: U8 snoRNA-decapping enzyme (195 aa).

Positions 18 to 168 constitute a Nudix hydrolase domain; sequence GWRHACHAML…LENTFIGNAR (151 aa). Residues histidine 24, arginine 50, and phenylalanine 57 each contribute to the substrate site. Glycine 59, glutamate 76, glutamate 80, and histidine 99 together coordinate Mn(2+). The Nudix box motif lies at 61 to 82; that stretch reads FVDLRDGSLEDGLNRELGEELG. Asparagine 166 and glutamine 170 together coordinate substrate. Glutamate 173 lines the Mn(2+) pocket.

The protein belongs to the Nudix hydrolase family. NUDT16 subfamily. Homodimer. Requires Mg(2+) as cofactor. Mn(2+) is required as a cofactor. It depends on Co(2+) as a cofactor.

Its subcellular location is the nucleus. The protein localises to the nucleolus. It is found in the nucleoplasm. The protein resides in the cytoplasm. The catalysed reaction is a 5'-end (N(7)-methyl 5'-triphosphoguanosine)-ribonucleoside in mRNA + H2O = N(7)-methyl-GDP + a 5'-end phospho-ribonucleoside in mRNA + 2 H(+). It catalyses the reaction IDP + H2O = IMP + phosphate + H(+). The enzyme catalyses dIDP + H2O = dIMP + phosphate + H(+). It carries out the reaction a 5'-end NAD(+)-phospho-ribonucleoside in mRNA + H2O = a 5'-end phospho-ribonucleoside in mRNA + NAD(+) + H(+). The catalysed reaction is a 5'-end FAD-phospho-ribonucleoside in mRNA + H2O = a 5'-end phospho-adenosine-phospho-ribonucleoside in mRNA + FMN + 2 H(+). It catalyses the reaction a 5'-end CoA-ribonucleoside in mRNA + H2O = a 5'-end phospho-adenosine-phospho-ribonucleoside in mRNA + (R)-4'-phosphopantetheine + 2 H(+). In terms of biological role, RNA-binding and decapping enzyme that catalyzes the cleavage of the cap structure of snoRNAs and mRNAs in a metal-dependent manner. Part of the U8 snoRNP complex that is required for the accumulation of mature 5.8S and 28S rRNA. Has diphosphatase activity and removes m7G and/or m227G caps from U8 snoRNA and leaves a 5'monophosphate on the RNA. Also catalyzes the cleavage of the cap structure on mRNAs. Does not hydrolyze cap analog structures like 7-methylguanosine nucleoside triphosphate (m7GpppG). Also hydrolysis m7G- and m227G U3-capped RNAs but with less efficiencies. Has broad substrate specificity with manganese or cobalt as cofactor and can act on various RNA species. Binds to the U8 snoRNA; metal is not required for RNA-binding. May play a role in the regulation of snoRNAs and mRNAs degradation. Also acts as a phosphatase; hydrolyzes the non-canonical purine nucleotides inosine diphosphate (IDP) and deoxyinosine diphosphate (dITP) as well as guanosine diphosphate (GDP), deoxyguanosine diphosphate (dGDP), xanthine diphosphate (XDP), inosine triphosphate (ITP) and deoxyinosine triphosphate (ITP) to their respective monophosphate derivatives and does not distinguish between the deoxy- and ribose forms. The order of activity with different substrates is IDP &gt; dIDP &gt;&gt; GDP = dGDP &gt; XDP = ITP = dITP. Binds strongly to GTP, ITP and XTP. Participates in the hydrolysis of dIDP/IDP and probably excludes non-canonical purines from RNA and DNA precursor pools, thus preventing their incorporation into RNA and DNA and avoiding chromosomal lesions. Exhibits decapping activity towards NAD-capped RNAs and FAD-capped RNAs. Exhibits decapping activity towards dpCoA-capped RNAs in vitro. This chain is U8 snoRNA-decapping enzyme (NUDT16), found in Ovis aries (Sheep).